Here is a 463-residue protein sequence, read N- to C-terminus: Bifunctional protein HldE (463 aa).

The segment at 1 to 315 (MKKILVIGDL…LILNQTHPKI (315 aa)) is ribokinase. An ATP-binding site is contributed by 191–194 (NRAE). Aspartate 260 is an active-site residue. The interval 334 to 463 (FTNGCFDLLH…IEKIKRTHND (130 aa)) is cytidylyltransferase.

It in the N-terminal section; belongs to the carbohydrate kinase PfkB family. The protein in the C-terminal section; belongs to the cytidylyltransferase family. In terms of assembly, homodimer.

The enzyme catalyses D-glycero-beta-D-manno-heptose 7-phosphate + ATP = D-glycero-beta-D-manno-heptose 1,7-bisphosphate + ADP + H(+). It catalyses the reaction D-glycero-beta-D-manno-heptose 1-phosphate + ATP + H(+) = ADP-D-glycero-beta-D-manno-heptose + diphosphate. Its pathway is nucleotide-sugar biosynthesis; ADP-L-glycero-beta-D-manno-heptose biosynthesis; ADP-L-glycero-beta-D-manno-heptose from D-glycero-beta-D-manno-heptose 7-phosphate: step 1/4. It participates in nucleotide-sugar biosynthesis; ADP-L-glycero-beta-D-manno-heptose biosynthesis; ADP-L-glycero-beta-D-manno-heptose from D-glycero-beta-D-manno-heptose 7-phosphate: step 3/4. Its function is as follows. Catalyzes the phosphorylation of D-glycero-D-manno-heptose 7-phosphate at the C-1 position to selectively form D-glycero-beta-D-manno-heptose-1,7-bisphosphate. In terms of biological role, catalyzes the ADP transfer from ATP to D-glycero-beta-D-manno-heptose 1-phosphate, yielding ADP-D-glycero-beta-D-manno-heptose. The chain is Bifunctional protein HldE from Helicobacter pylori (strain HPAG1).